Consider the following 367-residue polypeptide: UDP-N-acetylglucosamine--N-acetylmuramyl-(pentapeptide) pyrophosphoryl-undecaprenol N-acetylglucosamine transferase (367 aa).

UDP-N-acetyl-alpha-D-glucosamine-binding positions include 15-17, Asn-127, Arg-163, Ser-191, Ile-249, and Gln-294; that span reads TGG.

This sequence belongs to the glycosyltransferase 28 family. MurG subfamily.

It is found in the cell inner membrane. The enzyme catalyses di-trans,octa-cis-undecaprenyl diphospho-N-acetyl-alpha-D-muramoyl-L-alanyl-D-glutamyl-meso-2,6-diaminopimeloyl-D-alanyl-D-alanine + UDP-N-acetyl-alpha-D-glucosamine = di-trans,octa-cis-undecaprenyl diphospho-[N-acetyl-alpha-D-glucosaminyl-(1-&gt;4)]-N-acetyl-alpha-D-muramoyl-L-alanyl-D-glutamyl-meso-2,6-diaminopimeloyl-D-alanyl-D-alanine + UDP + H(+). Its pathway is cell wall biogenesis; peptidoglycan biosynthesis. In terms of biological role, cell wall formation. Catalyzes the transfer of a GlcNAc subunit on undecaprenyl-pyrophosphoryl-MurNAc-pentapeptide (lipid intermediate I) to form undecaprenyl-pyrophosphoryl-MurNAc-(pentapeptide)GlcNAc (lipid intermediate II). In Burkholderia lata (strain ATCC 17760 / DSM 23089 / LMG 22485 / NCIMB 9086 / R18194 / 383), this protein is UDP-N-acetylglucosamine--N-acetylmuramyl-(pentapeptide) pyrophosphoryl-undecaprenol N-acetylglucosamine transferase.